Reading from the N-terminus, the 486-residue chain is FAD-dependent oxidoreductase domain-containing protein 1 (486 aa).

Residues 66–82 (VVIVGGGVLGLSVAYWL) form a helical membrane-spanning segment.

In terms of assembly, associates with components of the mitochondrial respiratory chain complex I. The cofactor is FAD.

The protein localises to the mitochondrion inner membrane. Functionally, required for the assembly of the mitochondrial membrane respiratory chain NADH dehydrogenase (Complex I). Involved in mid-late stages of complex I assembly. The chain is FAD-dependent oxidoreductase domain-containing protein 1 (FOXRED1) from Bos taurus (Bovine).